Reading from the N-terminus, the 437-residue chain is Probable glycine dehydrogenase (decarboxylating) subunit 1 (437 aa).

The protein belongs to the GcvP family. N-terminal subunit subfamily. In terms of assembly, the glycine cleavage system is composed of four proteins: P, T, L and H. In this organism, the P 'protein' is a heterodimer of two subunits.

The enzyme catalyses N(6)-[(R)-lipoyl]-L-lysyl-[glycine-cleavage complex H protein] + glycine + H(+) = N(6)-[(R)-S(8)-aminomethyldihydrolipoyl]-L-lysyl-[glycine-cleavage complex H protein] + CO2. The glycine cleavage system catalyzes the degradation of glycine. The P protein binds the alpha-amino group of glycine through its pyridoxal phosphate cofactor; CO(2) is released and the remaining methylamine moiety is then transferred to the lipoamide cofactor of the H protein. The polypeptide is Probable glycine dehydrogenase (decarboxylating) subunit 1 (Thermotoga maritima (strain ATCC 43589 / DSM 3109 / JCM 10099 / NBRC 100826 / MSB8)).